Consider the following 317-residue polypeptide: Beta-ketoacyl-[acyl-carrier-protein] synthase III (317 aa).

Active-site residues include cysteine 112 and histidine 244. Positions 245–249 are ACP-binding; that stretch reads QANIR. The active site involves asparagine 274.

The protein belongs to the thiolase-like superfamily. FabH family. Homodimer.

The protein resides in the cytoplasm. It carries out the reaction malonyl-[ACP] + acetyl-CoA + H(+) = 3-oxobutanoyl-[ACP] + CO2 + CoA. It functions in the pathway lipid metabolism; fatty acid biosynthesis. In terms of biological role, catalyzes the condensation reaction of fatty acid synthesis by the addition to an acyl acceptor of two carbons from malonyl-ACP. Catalyzes the first condensation reaction which initiates fatty acid synthesis and may therefore play a role in governing the total rate of fatty acid production. Possesses both acetoacetyl-ACP synthase and acetyl transacylase activities. Its substrate specificity determines the biosynthesis of branched-chain and/or straight-chain of fatty acids. The protein is Beta-ketoacyl-[acyl-carrier-protein] synthase III of Rickettsia felis (strain ATCC VR-1525 / URRWXCal2) (Rickettsia azadi).